Here is a 338-residue protein sequence, read N- to C-terminus: Glycerol-3-phosphate dehydrogenase [NAD(P)+] (338 aa).

Residues Ser12, Trp13, and Lys110 each coordinate NADPH. Positions 110, 141, and 143 each coordinate sn-glycerol 3-phosphate. Ala145 is a binding site for NADPH. Sn-glycerol 3-phosphate is bound by residues Lys196, Asp249, Ser259, Arg260, and Asn261. The active-site Proton acceptor is the Lys196. Residue Arg260 participates in NADPH binding. Residues Val284 and Glu286 each contribute to the NADPH site.

The protein belongs to the NAD-dependent glycerol-3-phosphate dehydrogenase family.

Its subcellular location is the cytoplasm. It catalyses the reaction sn-glycerol 3-phosphate + NAD(+) = dihydroxyacetone phosphate + NADH + H(+). The enzyme catalyses sn-glycerol 3-phosphate + NADP(+) = dihydroxyacetone phosphate + NADPH + H(+). It participates in membrane lipid metabolism; glycerophospholipid metabolism. Catalyzes the reduction of the glycolytic intermediate dihydroxyacetone phosphate (DHAP) to sn-glycerol 3-phosphate (G3P), the key precursor for phospholipid synthesis. The chain is Glycerol-3-phosphate dehydrogenase [NAD(P)+] from Pediococcus pentosaceus (strain ATCC 25745 / CCUG 21536 / LMG 10740 / 183-1w).